The primary structure comprises 623 residues: Phosphoenolpyruvate carboxykinase [GTP] (623 aa).

Residues R86 and 220–222 (YGG) each bind substrate. Positions 229 and 248 each coordinate Mn(2+). S270 contacts substrate. 271 to 276 (MCGKTS) is a binding site for GTP. C272 is a catalytic residue. Residue D289 coordinates Mn(2+). Residue 384–386 (NAR) coordinates substrate. Positions 386 and 418 each coordinate GTP.

Belongs to the phosphoenolpyruvate carboxykinase [GTP] family. As to quaternary structure, homotetramer. Requires Mn(2+) as cofactor.

The protein resides in the cytoplasm. It carries out the reaction oxaloacetate + GTP = phosphoenolpyruvate + GDP + CO2. It functions in the pathway carbohydrate biosynthesis; gluconeogenesis. In terms of biological role, involved in the gluconeogenesis. Catalyzes the conversion of oxaloacetate (OAA) to phosphoenolpyruvate (PEP), the rate-limiting step in the metabolic pathway that produces glucose from lactate and other precursors derived from the citric acid cycle. The protein is Phosphoenolpyruvate carboxykinase [GTP] (pckG) of Thermococcus kodakarensis (strain ATCC BAA-918 / JCM 12380 / KOD1) (Pyrococcus kodakaraensis (strain KOD1)).